A 363-amino-acid chain; its full sequence is Sulfate/thiosulfate import ATP-binding protein CysA (363 aa).

The ABC transporter domain occupies isoleucine 3–leucine 237. Residue glycine 35–threonine 42 participates in ATP binding.

Belongs to the ABC transporter superfamily. Sulfate/tungstate importer (TC 3.A.1.6) family. As to quaternary structure, the complex is composed of two ATP-binding proteins (CysA), two transmembrane proteins (CysT and CysW) and a solute-binding protein (CysP).

It localises to the cell inner membrane. It catalyses the reaction sulfate(out) + ATP + H2O = sulfate(in) + ADP + phosphate + H(+). The catalysed reaction is thiosulfate(out) + ATP + H2O = thiosulfate(in) + ADP + phosphate + H(+). Functionally, part of the ABC transporter complex CysAWTP involved in sulfate/thiosulfate import. Responsible for energy coupling to the transport system. The sequence is that of Sulfate/thiosulfate import ATP-binding protein CysA from Yersinia pestis.